A 103-amino-acid polypeptide reads, in one-letter code: uncharacterized protein (103 aa).

Residues 33-57 traverse the membrane as a helical segment; that stretch reads GYVAAIVAGPVSMSPLDWICPLLAI.

It localises to the membrane. This is an uncharacterized protein from Sinorhizobium fredii (strain NBRC 101917 / NGR234).